We begin with the raw amino-acid sequence, 192 residues long: Imidazoleglycerol-phosphate dehydratase (192 aa).

Belongs to the imidazoleglycerol-phosphate dehydratase family.

The protein localises to the cytoplasm. It carries out the reaction D-erythro-1-(imidazol-4-yl)glycerol 3-phosphate = 3-(imidazol-4-yl)-2-oxopropyl phosphate + H2O. Its pathway is amino-acid biosynthesis; L-histidine biosynthesis; L-histidine from 5-phospho-alpha-D-ribose 1-diphosphate: step 6/9. In Hydrogenobaculum sp. (strain Y04AAS1), this protein is Imidazoleglycerol-phosphate dehydratase.